The following is a 355-amino-acid chain: Methionine import ATP-binding protein MetN (355 aa).

In terms of domain architecture, ABC transporter spans 8–250 (LKNIDITFTQ…PQEDLTQEFI (243 aa)). 42-49 (GYSGAGKS) is a binding site for ATP.

Belongs to the ABC transporter superfamily. Methionine importer (TC 3.A.1.24) family. The complex is composed of two ATP-binding proteins (MetN), two transmembrane proteins (MetI) and a solute-binding protein (MetQ).

It localises to the cell membrane. It catalyses the reaction L-methionine(out) + ATP + H2O = L-methionine(in) + ADP + phosphate + H(+). It carries out the reaction D-methionine(out) + ATP + H2O = D-methionine(in) + ADP + phosphate + H(+). Part of the ABC transporter complex MetNIQ involved in methionine import. Responsible for energy coupling to the transport system. This chain is Methionine import ATP-binding protein MetN, found in Streptococcus thermophilus (strain CNRZ 1066).